The chain runs to 179 residues: Ribosome maturation factor RimM (179 aa).

The 72-residue stretch at 102–173 (PEEYHYRDLI…ALHVQPPPGL (72 aa)) folds into the PRC barrel domain.

Belongs to the RimM family. Binds ribosomal protein uS19.

It is found in the cytoplasm. Functionally, an accessory protein needed during the final step in the assembly of 30S ribosomal subunit, possibly for assembly of the head region. Essential for efficient processing of 16S rRNA. May be needed both before and after RbfA during the maturation of 16S rRNA. It has affinity for free ribosomal 30S subunits but not for 70S ribosomes. The protein is Ribosome maturation factor RimM of Synechococcus sp. (strain JA-2-3B'a(2-13)) (Cyanobacteria bacterium Yellowstone B-Prime).